Here is a 237-residue protein sequence, read N- to C-terminus: Mitochondrial inner membrane protease atp23 (237 aa).

H136 provides a ligand contact to a divalent metal cation. Residue E137 is part of the active site. H140 lines the a divalent metal cation pocket.

Belongs to the peptidase M76 family.

It is found in the mitochondrion inner membrane. Functionally, has a dual role in the assembly of mitochondrial ATPase. Acts as a protease that removes N-terminal residues of mitochondrial ATPase CF(0) subunit 6 at the intermembrane space side. Also involved in the correct assembly of the membrane-embedded ATPase CF(0) particle, probably mediating association of subunit 6 with the subunit 9 ring. This Aspergillus clavatus (strain ATCC 1007 / CBS 513.65 / DSM 816 / NCTC 3887 / NRRL 1 / QM 1276 / 107) protein is Mitochondrial inner membrane protease atp23 (atp23).